Reading from the N-terminus, the 275-residue chain is Translation initiation factor 2 subunit alpha (275 aa).

An S1 motif domain is found at 12-83; the sequence is GELVVATVKR…KKGHIDLSLR (72 aa).

Belongs to the eIF-2-alpha family. Heterotrimer composed of an alpha, a beta and a gamma chain.

Functionally, eIF-2 functions in the early steps of protein synthesis by forming a ternary complex with GTP and initiator tRNA. The polypeptide is Translation initiation factor 2 subunit alpha (Pyrococcus furiosus (strain ATCC 43587 / DSM 3638 / JCM 8422 / Vc1)).